A 153-amino-acid polypeptide reads, in one-letter code: Endoribonuclease YbeY (153 aa).

3 residues coordinate Zn(2+): histidine 114, histidine 118, and histidine 124.

This sequence belongs to the endoribonuclease YbeY family. Zn(2+) is required as a cofactor.

The protein localises to the cytoplasm. Single strand-specific metallo-endoribonuclease involved in late-stage 70S ribosome quality control and in maturation of the 3' terminus of the 16S rRNA. This Shewanella baltica (strain OS185) protein is Endoribonuclease YbeY.